The following is a 365-amino-acid chain: PHD finger protein 6 (365 aa).

The residue at position 2 (serine 2) is an N-acetylserine. 2 short sequence motifs (nuclear localization signal) span residues arginine 13–lysine 16 and arginine 129–lysine 133. Residues glutamine 14–leucine 52 form a C2HC pre-PHD-type 1 zinc finger. The interval glutamine 14–lysine 132 is extended PHD1 domain (ePHD1). A PHD-type 1 zinc finger spans residues leucine 80–lysine 132. Serine 138, serine 145, and serine 155 each carry phosphoserine. The segment at glutamate 139–lysine 211 is disordered. A Nucleolar localization signal motif is present at residues lysine 157–lysine 169. A compositionally biased stretch (basic residues) spans lysine 157 to asparagine 171. Residue lysine 173 forms a Glycyl lysine isopeptide (Lys-Gly) (interchain with G-Cter in SUMO2) linkage. Residues serine 183 and serine 199 each carry the phosphoserine modification. The C2HC pre-PHD-type 2 zinc-finger motif lies at arginine 209–threonine 249. An extended PHD2 domain (ePHD2) region spans residues arginine 209–serine 330. A Glycyl lysine isopeptide (Lys-Gly) (interchain with G-Cter in SUMO2) cross-link involves residue lysine 227. Residues methionine 278 to serine 330 form a PHD-type 2 zinc finger. The disordered stretch occupies residues serine 330 to asparagine 365. Over residues arginine 342–isoleucine 352 the composition is skewed to basic and acidic residues. Residues glutamine 354–asparagine 365 show a composition bias toward low complexity. Threonine 358 bears the Phosphothreonine mark.

Interacts with UBTF. Interacts with the NuRD complex component RBBP4 (via the nucleolar localization motif), the interaction mediates transcriptional repression activity.

The protein localises to the nucleus. Its subcellular location is the nucleolus. It localises to the chromosome. The protein resides in the centromere. It is found in the kinetochore. Transcriptional regulator that associates with ribosomal RNA promoters and suppresses ribosomal RNA (rRNA) transcription. The sequence is that of PHD finger protein 6 (PHF6) from Pongo abelii (Sumatran orangutan).